The sequence spans 303 residues: MSQDAPSCFTAIISPADRVQVLAEALPYIQRFAGKTIVVKYGGAAMVKENLRDLVIRDIVFLATVGIKPVVVHGGGPEINSWLERLNIPVQFVGGLRVTDKITMEVVEMVLAGKVNKSIVQMINQAGGSAVGLCGRDGSIIEARPHQSAQLQPDIGFVGDIQSVNPKLIQSLLKEGHIPVLSSVASDENGQAYNINADTAAGELAAALDAEKLILLTDTPGILLDKDHPRSLIRKLDIYQARKLIAEGVVDGGMIPKVQCCVRALAQGVRAAHIVDGRQMHALLLEVLTDQGIGSMLVASELV.

Substrate is bound by residues 75–76 (GG), Arg97, and Asn194.

It belongs to the acetylglutamate kinase family. ArgB subfamily.

Its subcellular location is the cytoplasm. The catalysed reaction is N-acetyl-L-glutamate + ATP = N-acetyl-L-glutamyl 5-phosphate + ADP. It functions in the pathway amino-acid biosynthesis; L-arginine biosynthesis; N(2)-acetyl-L-ornithine from L-glutamate: step 2/4. In terms of biological role, catalyzes the ATP-dependent phosphorylation of N-acetyl-L-glutamate. The protein is Acetylglutamate kinase of Gloeobacter violaceus (strain ATCC 29082 / PCC 7421).